The following is a 342-amino-acid chain: S-adenosylmethionine:tRNA ribosyltransferase-isomerase (342 aa).

It belongs to the QueA family. As to quaternary structure, monomer.

The protein localises to the cytoplasm. The enzyme catalyses 7-aminomethyl-7-carbaguanosine(34) in tRNA + S-adenosyl-L-methionine = epoxyqueuosine(34) in tRNA + adenine + L-methionine + 2 H(+). It functions in the pathway tRNA modification; tRNA-queuosine biosynthesis. Its function is as follows. Transfers and isomerizes the ribose moiety from AdoMet to the 7-aminomethyl group of 7-deazaguanine (preQ1-tRNA) to give epoxyqueuosine (oQ-tRNA). This chain is S-adenosylmethionine:tRNA ribosyltransferase-isomerase, found in Oceanobacillus iheyensis (strain DSM 14371 / CIP 107618 / JCM 11309 / KCTC 3954 / HTE831).